Consider the following 1251-residue polypeptide: Cyclic nucleotide-gated channel beta-1 (1251 aa).

Disordered regions lie at residues 1-75 (MLGW…QETK), 121-151 (ITED…EAQD), 172-252 (QPPK…TRDP), and 314-561 (EDAH…STNS). The Cytoplasmic portion of the chain corresponds to 1–656 (MLGWVQRVLP…SIDPLTNLMY (656 aa)). The segment covering 23-50 (EEEEVEPEPEMEAEVEPEPNPEEAETES) has biased composition (acidic residues). Polar residues predominate over residues 238–247 (GSQAQTSSLP). The segment covering 335–352 (EENKAVEKMPRELSRIEE) has biased composition (basic and acidic residues). A compositionally biased stretch (acidic residues) spans 353-373 (EKEDEEEEEEEEEEEEEEEVT). The span at 404–423 (KLWEEVGEEAKKEAEEKAKE) shows a compositional bias: basic and acidic residues. The span at 424–434 (EAEEVAEEEAE) shows a compositional bias: acidic residues. Residues 435-446 (KEPQDWAETKEE) show a composition bias toward basic and acidic residues. The interval 557–567 (ASTNSAIINDR) is calmodulin-binding CaM1. Residues 568 to 578 (LQELVKLFKER) carry the IQ-like motif. The tract at residues 585-619 (KLIDPDVTSDEESPKPSPAKKAPEPAPDTKPAEAE) is disordered. Residues 657–678 (VLWLFFVVMAWNWNCWLIPVRW) form a helical membrane-spanning segment. The Extracellular portion of the chain corresponds to 679–687 (AFPYQTPDN). Residues 688 to 709 (IHHWLLMDYLCDLIYFLDITVF) form a helical membrane-spanning segment. At 710–724 (QTRLQFVRGGDIITD) the chain is on the cytoplasmic side. The helical transmembrane segment at 725-744 (KKDMRNNYLKSRRFKMDLLS) threads the bilayer. Residues 745-760 (LLPLDFLYLKVGVNPL) lie on the Extracellular side of the membrane. Residues 761–773 (LRLPRCLKYMAFF) form a helical membrane-spanning segment. Residues 774–785 (EFNSRLESILSK) lie on the Cytoplasmic side of the membrane. Residues 786–808 (AYVYRVIRTTAYLLYSLHLNSCL) form a helical membrane-spanning segment. Positions 786 to 885 (AYVYRVIRTT…IGQMRDVVGA (100 aa)) are ion conduction pathway. Topologically, residues 809 to 831 (YYWASAYQGLGSTHWVYDGVGNS) are extracellular. 2 consecutive transmembrane segments (helical) span residues 832-858 (YIRC…LFEI) and 859-884 (VFQL…DVVG). Over 885-1251 (AATAGQTYYR…MPEEREEKAE (367 aa)) the chain is Cytoplasmic. Residues 888 to 964 (AGQTYYRSCM…NIVSKVALFQ (77 aa)) form a C-linker region. A cyclic nucleotide-binding domain region spans residues 968–1084 (RQMIFDMLKR…LLRKKARRML (117 aa)). 3',5'-cyclic GMP-binding residues include Gly-1029, Glu-1030, Ser-1032, Arg-1042, and Thr-1043. Arg-1042 provides a ligand contact to 3',5'-cyclic AMP. The tract at residues 1148–1154 (QQELVEQ) is calmodulin-binding CaM2. A disordered region spans residues 1151–1251 (LVEQAKSSQD…MPEEREEKAE (101 aa)). The segment covering 1183 to 1203 (PPAPRTPPEPPGSPPSSPPPA) has biased composition (pro residues). The span at 1242–1251 (MPEEREEKAE) shows a compositional bias: basic and acidic residues.

This sequence belongs to the cyclic nucleotide-gated cation channel (TC 1.A.1.5) family. CNGB1 subfamily. As to quaternary structure, the rod cyclic nucleotide-gated channel is a heterotetramer composed of CNGA1 and CNGB1 subunits with 3:1 stoichiometry. CNGA1:CNGB1 channel binds Ca(2+)-bound CALM1 via CaM1 and CaM2 regions of the CNGB1 subunit; this interaction modulates the affinity of the channel for cNMPs in response to intracellular Ca(2+) levels. The olfactory cyclic nucleotide-gated channel is a heterotetramer composed of CNGA2, CNGA4 and CNGB1 subunits with 2:1:1 stoichiometry.

It localises to the cell membrane. Its subcellular location is the cell projection. The protein localises to the cilium membrane. The enzyme catalyses Ca(2+)(in) = Ca(2+)(out). The catalysed reaction is Na(+)(in) = Na(+)(out). It catalyses the reaction K(+)(in) = K(+)(out). It carries out the reaction NH4(+)(in) = NH4(+)(out). The enzyme catalyses Rb(+)(in) = Rb(+)(out). The catalysed reaction is Li(+)(in) = Li(+)(out). It catalyses the reaction Cs(+)(in) = Cs(+)(out). Pore-forming subunit of the rod cyclic nucleotide-gated channel. Mediates rod photoresponses at dim light converting transient changes in intracellular cGMP levels into electrical signals. In the dark, cGMP levels are high and keep the channel open enabling a steady inward current carried by Na(+) and Ca(2+) ions that leads to membrane depolarization and neurotransmitter release from synaptic terminals. Upon photon absorption cGMP levels decline leading to channel closure and membrane hyperpolarization that ultimately slows neurotransmitter release and signals the presence of light, the end point of the phototransduction cascade. Pore-forming subunit of the olfactory cyclic nucleotide-gated channel. Operates in the cilia of olfactory sensory neurons where chemical stimulation of the odorant is converted to an electrical signal. Mediates odorant-induced cAMP-dependent Ca(2+) influx triggering neuron depolarization. The rise of intracellular Ca(2+) levels potentiates the olfactory response by activating Ca(2+)-dependent Cl(-) channels, but it also serves as a negative feedback signal to desensitize the channel for rapid adaptation to odorants. Conducts cGMP- and cAMP-gated ion currents, with permeability for monovalent and divalent cations. The selectivity for Ca(2+) over Na(+) increases with cGMP concentrations, whereas the selectivity among monovalent ions is independent of the cGMP levels. In terms of biological role, high affinity rod photoreceptor phosphodiesterase (PDE6)-binding protein that modulates its catalytic properties: it is a regulator of spontaneous activation of rod PDE6, thereby serving to lower rod photoreceptor 'dark noise' and allowing these sensory cells to operate at the single photon detection limit. This chain is Cyclic nucleotide-gated channel beta-1, found in Homo sapiens (Human).